An 883-amino-acid polypeptide reads, in one-letter code: Envelope glycoprotein B (883 aa).

The signal sequence occupies residues 1 to 31; the sequence is MQSYIAVNIDMASLKMLICVCVAILIPSTLS. At 32-750 the chain is on the virion surface side; sequence QDSHGIAGII…SGIASFLSNP (719 aa). Disulfide bonds link Cys77–Cys535, Cys94–Cys491, Cys167–Cys229, Cys321–Cys369, and Cys558–Cys608. N-linked (GlcNAc...) asparagine; by host glycans are attached at residues Asn102 and Asn121. The interval 134–140 is involved in fusion and/or binding to host membrane; it reads TWALFSR. Asn211 carries N-linked (GlcNAc...) asparagine; by host glycosylation. The interval 216-223 is involved in fusion and/or binding to host membrane; the sequence is HQTLGYRT. N-linked (GlcNAc...) asparagine; by host glycans are attached at residues Asn262 and Asn360. Residues 428–457 form a disordered region; it reads QNHLPRGRERRQAAGRRTASLQSGPQGDRI. N-linked (GlcNAc...) asparagine; by host glycosylation is found at Asn579, Asn635, and Asn649. 2 hydrophobic membrane proximal region regions span residues 694-748 and 724-744; these read IDTV…SFLS and ALGTVVMTAAAAVISTVSGIA. A helical transmembrane segment spans residues 751-771; that stretch reads FAALGIGIAVVVSIILGLLAF. The Intravirion segment spans residues 772–883; that stretch reads KYVMNLKSNP…PSWAEESEDE (112 aa). The interval 791–817 is disordered; sequence PPAGTPPRPSRRYYKDEEEVEEDSDED. Positions 806 to 817 are enriched in acidic residues; the sequence is DEEEVEEDSDED. An Internalization motif motif is present at residues 868–871; that stretch reads YPLL.

Belongs to the herpesviridae glycoprotein B family. Homotrimer; disulfide-linked. Binds to heparan sulfate proteoglycans. Interacts with gH/gL heterodimer. In terms of processing, a proteolytic cleavage by host furin generates two subunits that remain linked by disulfide bonds.

The protein localises to the virion membrane. It localises to the host cell membrane. The protein resides in the host endosome membrane. It is found in the host Golgi apparatus membrane. Its function is as follows. Envelope glycoprotein that forms spikes at the surface of virion envelope. Essential for the initial attachment to heparan sulfate moieties of the host cell surface proteoglycans. Involved in fusion of viral and cellular membranes leading to virus entry into the host cell. Following initial binding to its host receptors, membrane fusion is mediated by the fusion machinery composed at least of gB and the heterodimer gH/gL. May be involved in the fusion between the virion envelope and the outer nuclear membrane during virion egress. The protein is Envelope glycoprotein B of Gallus gallus (Chicken).